Reading from the N-terminus, the 232-residue chain is 5'-methylthioadenosine/S-adenosylhomocysteine nucleosidase (232 aa).

The Proton acceptor role is filled by glutamate 12. Substrate contacts are provided by residues glycine 78, valine 153, and 174 to 175 (ME). The active-site Proton donor is the aspartate 198.

Belongs to the PNP/UDP phosphorylase family. MtnN subfamily.

The enzyme catalyses S-adenosyl-L-homocysteine + H2O = S-(5-deoxy-D-ribos-5-yl)-L-homocysteine + adenine. It catalyses the reaction S-methyl-5'-thioadenosine + H2O = 5-(methylsulfanyl)-D-ribose + adenine. It carries out the reaction 5'-deoxyadenosine + H2O = 5-deoxy-D-ribose + adenine. Its pathway is amino-acid biosynthesis; L-methionine biosynthesis via salvage pathway; S-methyl-5-thio-alpha-D-ribose 1-phosphate from S-methyl-5'-thioadenosine (hydrolase route): step 1/2. In terms of biological role, catalyzes the irreversible cleavage of the glycosidic bond in both 5'-methylthioadenosine (MTA) and S-adenosylhomocysteine (SAH/AdoHcy) to adenine and the corresponding thioribose, 5'-methylthioribose and S-ribosylhomocysteine, respectively. Also cleaves 5'-deoxyadenosine, a toxic by-product of radical S-adenosylmethionine (SAM) enzymes, into 5-deoxyribose and adenine. The polypeptide is 5'-methylthioadenosine/S-adenosylhomocysteine nucleosidase (Photobacterium profundum (strain SS9)).